The sequence spans 250 residues: MAVTKLVLVRHGESVWNKENRFTGWTDVELSDKGRNEAQEAGKLLKAEGFTFDYAYTSVLKRAIHTLWNILDEVDQQWLPVEKSWKLNERHYGALQGLNKAETAEKYGDEQVKQWRRGFAVTPPELTKDDDRFPGKDPRYASLTEAELPLTESLALTIDRVTPYWEEVIKPRVASGDKVIIAAHGNSLRALVKYLDNMSEEEILELNIPTAVPLVYEFDENMKPIKRYYLGNAEEIAAKAAAVANQGKAK.

Residues 10–17 (RHGESVWN), 23–24 (TG), Arg62, 89–92 (ERHY), Lys100, 116–117 (RR), and 185–186 (GN) contribute to the substrate site. Catalysis depends on His11, which acts as the Tele-phosphohistidine intermediate. The active-site Proton donor/acceptor is Glu89.

Belongs to the phosphoglycerate mutase family. BPG-dependent PGAM subfamily. As to quaternary structure, homodimer.

The catalysed reaction is (2R)-2-phosphoglycerate = (2R)-3-phosphoglycerate. It participates in carbohydrate degradation; glycolysis; pyruvate from D-glyceraldehyde 3-phosphate: step 3/5. Functionally, catalyzes the interconversion of 2-phosphoglycerate and 3-phosphoglycerate. The polypeptide is 2,3-bisphosphoglycerate-dependent phosphoglycerate mutase (Proteus mirabilis (strain HI4320)).